We begin with the raw amino-acid sequence, 600 residues long: UvrABC system protein C (600 aa).

The 86-residue stretch at 15–100 (NSTGVYQYFN…IKQLHPKYNI (86 aa)) folds into the GIY-YIG domain. The UVR domain occupies 203 to 238 (SVLLKNLEKQMLVLAQNENYEEAAKVRDQIAMIKDL).

It belongs to the UvrC family. As to quaternary structure, interacts with UvrB in an incision complex.

The protein localises to the cytoplasm. Functionally, the UvrABC repair system catalyzes the recognition and processing of DNA lesions. UvrC both incises the 5' and 3' sides of the lesion. The N-terminal half is responsible for the 3' incision and the C-terminal half is responsible for the 5' incision. In Campylobacter jejuni subsp. jejuni serotype O:2 (strain ATCC 700819 / NCTC 11168), this protein is UvrABC system protein C.